A 369-amino-acid chain; its full sequence is Developmentally-regulated G-protein 3 (369 aa).

The region spanning 66–291 is the OBG-type G domain; it reads SRVGLVGFPS…LLDKIWEYLD (226 aa). GTP contacts are provided by residues 72-79, 118-122, and 249-252; these read GFPSVGKS, DLPGI, and NKID. One can recognise a TGS domain in the interval 291–367; sequence DLTRIYTKPK…EDEDVVQIVK (77 aa).

This sequence belongs to the TRAFAC class OBG-HflX-like GTPase superfamily. OBG GTPase family.

Its function is as follows. Binds GDP and GTP, and has low GTPase activity in vitro. This Arabidopsis thaliana (Mouse-ear cress) protein is Developmentally-regulated G-protein 3 (DRG3).